The primary structure comprises 93 residues: Beta-defensin 128 (93 aa).

The first 18 residues, 1–18 (MKLFLVLIILLFEVLTDG), serve as a signal peptide directing secretion. Intrachain disulfides connect Cys-24-Cys-52, Cys-32-Cys-46, and Cys-36-Cys-53.

It belongs to the beta-defensin family.

It is found in the secreted. Functionally, has antibacterial activity. This Pongo pygmaeus (Bornean orangutan) protein is Beta-defensin 128 (DEFB128).